A 510-amino-acid polypeptide reads, in one-letter code: Maturase K (510 aa).

The protein belongs to the intron maturase 2 family. MatK subfamily.

It is found in the plastid. It localises to the chloroplast. Usually encoded in the trnK tRNA gene intron. Probably assists in splicing its own and other chloroplast group II introns. The sequence is that of Maturase K from Populus nigra (Lombardy poplar).